An 874-amino-acid polypeptide reads, in one-letter code: Coatomer subunit gamma-1 (874 aa).

Over residues 1–11 (MLKKFDKKDEE) the composition is skewed to basic and acidic residues. The tract at residues 1–21 (MLKKFDKKDEESGGGSNPLQH) is disordered. 4 HEAT repeats span residues 64 to 101 (TEAT…IAED), 283 to 320 (KELA…KHPS), 322 to 355 (VTAC…GSES), and 356 to 392 (SIDR…KYPR). Threonine 594 carries the post-translational modification Phosphothreonine. The segment at 609 to 874 (RQEIFQEQLA…PVDIILASVG (266 aa)) is interaction with ZNF289/ARFGAP2.

The protein belongs to the COPG family. Oligomeric complex that consists of at least the alpha, beta, beta', gamma, delta, epsilon and zeta subunits. Interacts with ZNF289/ARFGAP2 through its C-terminal appendage domain. Interacts with EGFR upon EGF treatment; interaction is essential for regulation of EGF-dependent nuclear transport of EGFR by retrograde trafficking from the Golgi to the ER. The coatomer interacts with KDEL receptors; the interaction is important for retrograde trafficking of KDEL-bearing proteins from the Golgi to the endoplasmic reticulum. Interacts with COPB1. Interacts with TMED10 (via C-terminus). Interacts with TMED2, TMED3, TMED7 and TMED9.

The protein resides in the cytoplasm. It is found in the cytosol. Its subcellular location is the golgi apparatus membrane. The protein localises to the cytoplasmic vesicle. It localises to the COPI-coated vesicle membrane. Functionally, the coatomer is a cytosolic protein complex that binds to dilysine motifs and reversibly associates with Golgi non-clathrin-coated vesicles, which further mediate biosynthetic protein transport from the ER, via the Golgi up to the trans Golgi network. Coatomer complex is required for budding from Golgi membranes, and is essential for the retrograde Golgi-to-ER transport of dilysine-tagged proteins. In mammals, the coatomer can only be recruited by membranes associated to ADP-ribosylation factors (ARFs), which are small GTP-binding proteins; the complex also influences the Golgi structural integrity, as well as the processing, activity, and endocytic recycling of LDL receptors. Required for limiting lipid storage in lipid droplets. Involved in lipid homeostasis by regulating the presence of perilipin family members PLIN2 and PLIN3 at the lipid droplet surface and promoting the association of adipocyte triglyceride lipase (PNPLA2) with the lipid droplet surface to mediate lipolysis. This Rattus norvegicus (Rat) protein is Coatomer subunit gamma-1 (Copg1).